A 337-amino-acid chain; its full sequence is Aspartate carbamoyltransferase catalytic subunit (337 aa).

Carbamoyl phosphate contacts are provided by R59 and T60. K87 contacts L-aspartate. Carbamoyl phosphate is bound by residues R109, H142, and Q145. L-aspartate-binding residues include R182 and R253. Carbamoyl phosphate contacts are provided by G294 and P295.

The protein belongs to the aspartate/ornithine carbamoyltransferase superfamily. ATCase family. As to quaternary structure, heterododecamer (2C3:3R2) of six catalytic PyrB chains organized as two trimers (C3), and six regulatory PyrI chains organized as three dimers (R2).

The catalysed reaction is carbamoyl phosphate + L-aspartate = N-carbamoyl-L-aspartate + phosphate + H(+). It participates in pyrimidine metabolism; UMP biosynthesis via de novo pathway; (S)-dihydroorotate from bicarbonate: step 2/3. Catalyzes the condensation of carbamoyl phosphate and aspartate to form carbamoyl aspartate and inorganic phosphate, the committed step in the de novo pyrimidine nucleotide biosynthesis pathway. The polypeptide is Aspartate carbamoyltransferase catalytic subunit (Prochlorococcus marinus (strain MIT 9211)).